The sequence spans 295 residues: Acetylglutamate kinase (295 aa).

Substrate contacts are provided by residues 64 to 65 (GG), Arg-86, and Asn-190.

Belongs to the acetylglutamate kinase family. ArgB subfamily.

It localises to the cytoplasm. The enzyme catalyses N-acetyl-L-glutamate + ATP = N-acetyl-L-glutamyl 5-phosphate + ADP. It functions in the pathway amino-acid biosynthesis; L-arginine biosynthesis; N(2)-acetyl-L-ornithine from L-glutamate: step 2/4. Functionally, catalyzes the ATP-dependent phosphorylation of N-acetyl-L-glutamate. In Oleidesulfovibrio alaskensis (strain ATCC BAA-1058 / DSM 17464 / G20) (Desulfovibrio alaskensis), this protein is Acetylglutamate kinase.